We begin with the raw amino-acid sequence, 404 residues long: Zinc finger CCCH domain-containing protein 15 homolog (404 aa).

Positions 1-10 (MPPKKAPPGP) are enriched in pro residues. A disordered region spans residues 1–71 (MPPKKAPPGP…KRKEEKEKKL (71 aa)). Residues 12–28 (KKTEQKKKEKVIEDKTF) are compositionally biased toward basic and acidic residues. Positions 38-50 (QQKFIQQVQKQVQ) are enriched in low complexity. Over residues 56-71 (PRQDGDKRKEEKEKKL) the composition is skewed to basic and acidic residues. 2 C3H1-type zinc fingers span residues 94 to 121 (DPKS…HDLS) and 165 to 202 (PTTD…HALP). T218 is modified (phosphothreonine). Position 221 is a phosphoserine (S221). Residues 246 to 270 (LAWKKRKIAEKKAKLAAEEERKKSD) adopt a coiled-coil conformation. Low complexity-rich tracts occupy residues 352 to 361 (EAAKTAAAED) and 369 to 380 (PSSSAPANDAAP). A disordered region spans residues 352–380 (EAAKTAAAEDAAADEDGPSSSAPANDAAP).

It belongs to the ZC3H15/TMA46 family.

This Drosophila melanogaster (Fruit fly) protein is Zinc finger CCCH domain-containing protein 15 homolog.